A 521-amino-acid chain; its full sequence is Insulinoma-associated protein 1 (521 aa).

The span at 1–12 (MPRGFLVKRSKK) shows a compositional bias: basic residues. The SNAG domain stretch occupies residues 1–20 (MPRGFLVKRSKKSTPVSYRV). 3 disordered regions span residues 1–59 (MPRG…PPAL), 76–107 (GPPPPPPPGPRAAHFGNPEAAHPAPLYSPTRP), and 180–230 (AEAA…KPKA). A required and sufficient for interaction with KDM1A region spans residues 2 to 7 (PRGFLV). Positions 43-56 (PPVPSPGPLPPPPP) are necessary for interaction with CCND1. Composition is skewed to pro residues over residues 43–58 (PPVPSPGPLPPPPPPA) and 76–85 (GPPPPPPPGP). Residues 209-223 (AAVATEPPAKAAKAP) show a composition bias toward low complexity. The C2H2-type 1; atypical zinc-finger motif lies at 272 to 292 (FICQLCKEEYADPFALAQHKC). A C2H2-type 2 zinc finger spans residues 300 to 322 (YRCPECAKVFSCPANLASHRRWH). The disordered stretch occupies residues 320-369 (RWHKPRPVPAAARAPEPEAATRAEAREAAGGGSSDRDTPSPGGVSESGSE). A compositionally biased stretch (basic and acidic residues) spans 334–346 (PEPEAATRAEARE). The C2H2-type 3 zinc-finger motif lies at 373–395 (YECHHCAKKFRRQAYLRKHLLAH). The interval 398-419 (ALQAKGAPPPPPPPPPPAEDIL) is disordered. Residues 404 to 415 (APPPPPPPPPPA) are compositionally biased toward pro residues. 2 C2H2-type zinc fingers span residues 452 to 475 (HLCPVCGETFPSKGAQERHLRLLH) and 480 to 503 (FPCKYCPATFYSSPGLTRHINKCH).

Belongs to the INSM1 family. Interacts (via the N-terminal region) with CCND1 (via cyclin N-terminal domain); the interaction competes with the binding of CCND1 to CDK4 during cell cycle progression and increases its transcriptional repressor activity. Interacts with HDAC3; the interaction increases its transcriptional repressor activity. Interacts (via the SNAG domain) with HDAC1. Interacts (via the SNAG domain) with HDAC2. Interacts (via the SNAG domain) with KDM1A. Interacts (via the SNAG domain) with RCOR1. Interacts with SORBS1. In terms of tissue distribution, expressed in adrenal gland. Expressed in the dentate gyrus of the hippocampus and the wall of the lateral ventricle. Expressed in pancreatic and intestinal endocrine cells.

It localises to the nucleus. Its function is as follows. Sequence-specific DNA-binding transcriptional regulator that plays a key role in neurogenesis and neuroendocrine cell differentiation during embryonic and/or fetal development. Binds to the consensus sequence 5'-[TG][TC][TC][TT][GA]GGG[CG]A-3' in target promoters. Acts as a transcriptional repressor of NEUROD1 and INS expression via its interaction with cyclin CCND1 in a cell cycle-independent manner. Negatively regulates skeletal muscle-specific gene expression in endocrine cells of the pituitary by inhibiting the Notch signaling pathway. Represses target gene transcription by recruiting chromatin-modifying factors, such as HDAC1, HDAC2, HDAC3, KDM1A and RCOR1 histone deacetylases. Binds to its own promoter, suggesting autoregulation as a self-control feedback mechanism. Competes with histone H3 for the same binding site on the histone demethylase complex formed by KDM1A and RCOR1, and thereby inhibits demethylation of histone H3 at 'Lys-4'. Promotes the generation and expansion of neuronal basal progenitor cells in the developing neocortex. Involved in the differentiation of endocrine cells of the developing anterior pituitary gland, of the pancreas and intestine, and of sympatho-adrenal cells in the peripheral nervous system. Promotes cell cycle signaling arrest and inhibition of cellular proliferation. In Mus musculus (Mouse), this protein is Insulinoma-associated protein 1 (Insm1).